The primary structure comprises 251 residues: Triosephosphate isomerase (251 aa).

9-11 (NWK) provides a ligand contact to substrate. The Electrophile role is filled by histidine 96. Glutamate 168 acts as the Proton acceptor in catalysis. Residues glycine 174, serine 214, and 235-236 (GG) contribute to the substrate site.

It belongs to the triosephosphate isomerase family. Homodimer.

It is found in the cytoplasm. The catalysed reaction is D-glyceraldehyde 3-phosphate = dihydroxyacetone phosphate. The protein operates within carbohydrate biosynthesis; gluconeogenesis. It participates in carbohydrate degradation; glycolysis; D-glyceraldehyde 3-phosphate from glycerone phosphate: step 1/1. In terms of biological role, involved in the gluconeogenesis. Catalyzes stereospecifically the conversion of dihydroxyacetone phosphate (DHAP) to D-glyceraldehyde-3-phosphate (G3P). The polypeptide is Triosephosphate isomerase (Porphyromonas gingivalis (strain ATCC BAA-308 / W83)).